The chain runs to 291 residues: Bifunctional protein FolD (291 aa).

NADP(+) is bound by residues 168–170 (GRG), Thr-195, and Val-236.

The protein belongs to the tetrahydrofolate dehydrogenase/cyclohydrolase family. Homodimer.

The catalysed reaction is (6R)-5,10-methylene-5,6,7,8-tetrahydrofolate + NADP(+) = (6R)-5,10-methenyltetrahydrofolate + NADPH. It carries out the reaction (6R)-5,10-methenyltetrahydrofolate + H2O = (6R)-10-formyltetrahydrofolate + H(+). It functions in the pathway one-carbon metabolism; tetrahydrofolate interconversion. In terms of biological role, catalyzes the oxidation of 5,10-methylenetetrahydrofolate to 5,10-methenyltetrahydrofolate and then the hydrolysis of 5,10-methenyltetrahydrofolate to 10-formyltetrahydrofolate. The sequence is that of Bifunctional protein FolD from Bifidobacterium adolescentis (strain ATCC 15703 / DSM 20083 / NCTC 11814 / E194a).